The chain runs to 643 residues: Very long-chain fatty acid transport protein (643 aa).

The Cytoplasmic portion of the chain corresponds to M1–E15. A helical membrane pass occupies residues L16–A36. The Extracellular segment spans residues Y37–H138. A helical membrane pass occupies residues L139–L159. Topologically, residues T160–S249 are cytoplasmic. Y235–V246 provides a ligand contact to ATP. An intramembrane segment occupies T250–A318. Over N319 to L643 the chain is Cytoplasmic. The FACS motif lies at D477 to Q525.

Belongs to the ATP-dependent AMP-binding enzyme family.

Its subcellular location is the lipid droplet. It localises to the cell membrane. The protein resides in the peroxisome membrane. The protein localises to the peroxisome. It catalyses the reaction a very long-chain fatty acid + ATP + CoA = a very long-chain fatty acyl-CoA + AMP + diphosphate. Acyl-CoA synthetase required for both the import of long chain fatty acids (LCFAs) (C14-C18) and the activation very long chain fatty acids (VLCFAs) (C20-C26) by esterification of the fatty acids into metabolically active CoA-thioesters for subsequent degradation or incorporation into phospholipids. The transport and fatty acyl-CoA synthetase activities are genetically separable and are thus independent activities. Esterifies VLCFAs in the peroxisome matrix. The VLCFAs are actively transported into peroxisomes by a PXA1-PXA2 heterodimeric transporter in the peroxisomal membrane. In Cochliobolus heterostrophus (Southern corn leaf blight fungus), this protein is Very long-chain fatty acid transport protein (FAT1).